The chain runs to 218 residues: Large ribosomal subunit protein uL3 (218 aa).

Glutamine 153 bears the N5-methylglutamine mark.

Belongs to the universal ribosomal protein uL3 family. In terms of assembly, part of the 50S ribosomal subunit. Forms a cluster with proteins L14 and L19. Post-translationally, methylated by PrmB.

One of the primary rRNA binding proteins, it binds directly near the 3'-end of the 23S rRNA, where it nucleates assembly of the 50S subunit. The sequence is that of Large ribosomal subunit protein uL3 from Alkalilimnicola ehrlichii (strain ATCC BAA-1101 / DSM 17681 / MLHE-1).